A 1486-amino-acid chain; its full sequence is Protein PRRC2B (1486 aa).

5 disordered regions span residues 1–20, 39–306, 320–341, 385–519, and 531–658; these read MSDR…KYST, VIPR…FPLP, QMND…PLRQ, KFSD…AREE, and LDQK…EQLY. Polar residues predominate over residues 88 to 137; that stretch reads ANKQDQQDPKSSSVTASQPPESQPQPGLQKSVSNLQKPTQSISQENTNSV. Phosphoserine is present on residues Ser-166, Ser-168, Ser-222, and Ser-226. Positions 219-235 are enriched in polar residues; that stretch reads SAASLSASPTELGSRNA. Thr-228 is modified (phosphothreonine). Lys-251 participates in a covalent cross-link: Glycyl lysine isopeptide (Lys-Gly) (interchain with G-Cter in SUMO2). Polar residues predominate over residues 288–300; sequence SPQSSENQTTVER. Residues Ser-387 and Ser-415 each carry the phosphoserine modification. Basic and acidic residues-rich tracts occupy residues 422–433, 478–488, and 501–519; these read TDAKRTQEEGKD, HSAEDKEDKPP, and AVER…AREE. Residue Ser-479 is modified to Phosphoserine. The stretch at 494-544 forms a coiled coil; sequence IQSEMSEAVERARKRREEEERRAREERLAACAAKLKQLDQKCRQAQKANET. Ser-555 is subject to Phosphoserine. Positions 600-611 are enriched in low complexity; sequence SNSSSSSSSSSS. Ser-621 is subject to Phosphoserine. Positions 638-656 are enriched in low complexity; the sequence is QRQQQQQQQQQQQQQQQEQ. Lys-751 participates in a covalent cross-link: Glycyl lysine isopeptide (Lys-Gly) (interchain with G-Cter in SUMO2). Thr-753 carries the post-translational modification Phosphothreonine. Residues Ser-762 and Ser-793 each carry the phosphoserine modification. Disordered stretches follow at residues 792 to 847, 893 to 918, and 950 to 1080; these read RSPD…EARK, EERR…IPPR, and ALPV…PGAV. Residues 880-904 adopt a coiled-coil conformation; the sequence is IEVLTKKQRRLLEEERRKKEQAAQV. Polar residues predominate over residues 960-986; the sequence is SWRTAVTAFSSTEPGTSEQGFKSSQGD. Residues 998 to 1007 are compositionally biased toward low complexity; that stretch reads SSATSSQRSS. Composition is skewed to basic and acidic residues over residues 1025-1055 and 1062-1074; these read SKAD…EHRP and RSLK…EGAE. A phosphoserine mark is found at Ser-1070 and Ser-1159. 3 disordered regions span residues 1177-1205, 1410-1443, and 1455-1486; these read KAWE…SSVG, QSIQ…TSRE, and ADSK…AWEP. Polar residues predominate over residues 1181–1191; that stretch reads NSPSLPEQSSP. Residues 1410 to 1421 are compositionally biased toward low complexity; it reads QSIQLPPGQSLS. A compositionally biased stretch (polar residues) spans 1457 to 1474; sequence SKQNVPTGGSAPSPQAYR.

This is Protein PRRC2B (Prrc2b) from Mus musculus (Mouse).